The chain runs to 154 residues: Myoglobin (154 aa).

A Globin domain is found at 2-148 (GLSDDEWNHV…FRNDMASKYK (147 aa)). His-65 serves as a coordination point for nitrite. His-65 contacts O2. His-94 contributes to the heme b binding site.

It belongs to the globin family. In terms of assembly, monomeric.

The protein resides in the cytoplasm. The protein localises to the sarcoplasm. The catalysed reaction is Fe(III)-heme b-[protein] + nitric oxide + H2O = Fe(II)-heme b-[protein] + nitrite + 2 H(+). It catalyses the reaction H2O2 + AH2 = A + 2 H2O. Monomeric heme protein which primary function is to store oxygen and facilitate its diffusion within muscle tissues. Reversibly binds oxygen through a pentacoordinated heme iron and enables its timely and efficient release as needed during periods of heightened demand. Depending on the oxidative conditions of tissues and cells, and in addition to its ability to bind oxygen, it also has a nitrite reductase activity whereby it regulates the production of bioactive nitric oxide. Under stress conditions, like hypoxia and anoxia, it also protects cells against reactive oxygen species thanks to its pseudoperoxidase activity. The chain is Myoglobin (MB) from Caretta caretta (Loggerhead sea turtle).